Reading from the N-terminus, the 289-residue chain is Pantothenate synthetase (289 aa).

30–37 (MGNLHEGH) contributes to the ATP binding site. His37 serves as the catalytic Proton donor. Gln61 lines the (R)-pantoate pocket. Gln61 serves as a coordination point for beta-alanine. 149 to 152 (GEKD) is a binding site for ATP. Residue Gln155 participates in (R)-pantoate binding. Position 186-189 (186-189 (MSSR)) interacts with ATP.

Belongs to the pantothenate synthetase family. Homodimer.

It localises to the cytoplasm. The enzyme catalyses (R)-pantoate + beta-alanine + ATP = (R)-pantothenate + AMP + diphosphate + H(+). It participates in cofactor biosynthesis; (R)-pantothenate biosynthesis; (R)-pantothenate from (R)-pantoate and beta-alanine: step 1/1. Its function is as follows. Catalyzes the condensation of pantoate with beta-alanine in an ATP-dependent reaction via a pantoyl-adenylate intermediate. This is Pantothenate synthetase from Psychromonas ingrahamii (strain DSM 17664 / CCUG 51855 / 37).